Here is a 957-residue protein sequence, read N- to C-terminus: Plasma membrane ATPase 1 (957 aa).

Residues 1-66 (MGEEKPEVLD…EKKDSKLLKF (66 aa)) are Cytoplasmic-facing. A helical membrane pass occupies residues 67 to 86 (LGFMWNPLSWVMEAAAIMAI). At 87–98 (ALANGGGKPPDW) the chain is on the extracellular side. A helical transmembrane segment spans residues 99–119 (QDFVGIITLLIINSTISFIEE). Over 120–248 (NNAGNAAAAL…GHFQKVLTAI (129 aa)) the chain is Cytoplasmic. Residues 249–269 (GNFCICSIAVGMIIEIIVMYP) form a helical membrane-spanning segment. Residues 270-279 (IQHRAYRPGI) are Extracellular-facing. The chain crosses the membrane as a helical span at residues 280–301 (DNLLVLLIGGIPIAMPTVLSVT). Residues 302-648 (MAIGSHRLAQ…TSRAIFQRMK (347 aa)) lie on the Cytoplasmic side of the membrane. The 4-aspartylphosphate intermediate role is filled by Asp334. Residues Asp593 and Asp597 each contribute to the Mg(2+) site. Residues 649 to 670 (NYTIYAVSITIRIVLGFMLLAL) form a helical membrane-spanning segment. The Extracellular portion of the chain corresponds to 671-675 (IWKFD). Residues 676–698 (FPPFMVLIIAILNDGTIMTISKD) form a helical membrane-spanning segment. Residues 699-714 (RVKPSPLPDSWKLAEI) lie on the Cytoplasmic side of the membrane. The chain crosses the membrane as a helical span at residues 715–735 (FTTGIVLGGYLAMMTVIFFWA). At 736–760 (AYKTNFFPHVFGVSTLEKTATDDFR) the chain is on the extracellular side. The helical transmembrane segment at 761–781 (KLASAIYLQVSIISQALIFVT) threads the bilayer. Topologically, residues 782-793 (RSRSWSFVERPG) are cytoplasmic. A helical transmembrane segment spans residues 794–814 (FLLVIAFVIAQLVATLIAVYA). Over 815–823 (NWSFAAIEG) the chain is Extracellular. The helical transmembrane segment at 824–844 (IGWGWAGVIWIYNLVFYIPLD) threads the bilayer. Over 845–957 (IIKFFIRYAL…IETIQQAYTV (113 aa)) the chain is Cytoplasmic.

This sequence belongs to the cation transport ATPase (P-type) (TC 3.A.3) family. Type IIIA subfamily. Expressed in roots, stems, leaves from both vegetative and flowering plants, and flowers at early and late stages of development with highest expression levels found in flowers and stem.

It is found in the cell membrane. It carries out the reaction ATP + H2O + H(+)(in) = ADP + phosphate + 2 H(+)(out). Its function is as follows. The plasma membrane ATPase of plants and fungi is a hydrogen ion pump. The proton gradient it generates drives the active transport of nutrients by H(+)-symport. The resulting external acidification and/or internal alkinization may mediate growth responses. The protein is Plasma membrane ATPase 1 (PMA1) of Nicotiana plumbaginifolia (Leadwort-leaved tobacco).